We begin with the raw amino-acid sequence, 742 residues long: Phosphoribosylformylglycinamidine synthase subunit PurL (742 aa).

Residue H54 is part of the active site. 2 residues coordinate ATP: Y57 and K96. E98 serves as a coordination point for Mg(2+). Substrate is bound by residues 99–102 (SHNH) and R121. The Proton acceptor role is filled by H100. D122 is a binding site for Mg(2+). Substrate contacts are provided by G225 and Q245. A Mg(2+)-binding site is contributed by D273. 317 to 319 (ESQ) serves as a coordination point for substrate. ATP is bound at residue G537. N538 contacts Mg(2+). S540 contributes to the substrate binding site.

This sequence belongs to the FGAMS family. Monomer. Part of the FGAM synthase complex composed of 1 PurL, 1 PurQ and 2 PurS subunits.

It is found in the cytoplasm. The catalysed reaction is N(2)-formyl-N(1)-(5-phospho-beta-D-ribosyl)glycinamide + L-glutamine + ATP + H2O = 2-formamido-N(1)-(5-O-phospho-beta-D-ribosyl)acetamidine + L-glutamate + ADP + phosphate + H(+). The enzyme catalyses L-glutamine + H2O = L-glutamate + NH4(+). The protein operates within purine metabolism; IMP biosynthesis via de novo pathway; 5-amino-1-(5-phospho-D-ribosyl)imidazole from N(2)-formyl-N(1)-(5-phospho-D-ribosyl)glycinamide: step 1/2. Part of the phosphoribosylformylglycinamidine synthase complex involved in the purines biosynthetic pathway. Catalyzes the ATP-dependent conversion of formylglycinamide ribonucleotide (FGAR) and glutamine to yield formylglycinamidine ribonucleotide (FGAM) and glutamate. The FGAM synthase complex is composed of three subunits. PurQ produces an ammonia molecule by converting glutamine to glutamate. PurL transfers the ammonia molecule to FGAR to form FGAM in an ATP-dependent manner. PurS interacts with PurQ and PurL and is thought to assist in the transfer of the ammonia molecule from PurQ to PurL. The sequence is that of Phosphoribosylformylglycinamidine synthase subunit PurL from Bacillus subtilis (strain 168).